The chain runs to 198 residues: Molybdopterin synthase catalytic subunit (198 aa).

Residues 107 to 108, Lys123, and 130 to 132 contribute to the substrate site; these read HR and KKE.

Belongs to the MoaE family. MOCS2B subfamily. In terms of assembly, heterotetramer; composed of 2 small (MOCS2A) and 2 large (MOCS2B) subunits.

It localises to the cytoplasm. It carries out the reaction 2 [molybdopterin-synthase sulfur-carrier protein]-C-terminal-Gly-aminoethanethioate + cyclic pyranopterin phosphate + H2O = molybdopterin + 2 [molybdopterin-synthase sulfur-carrier protein]-C-terminal Gly-Gly + 2 H(+). It functions in the pathway cofactor biosynthesis; molybdopterin biosynthesis. Functionally, catalytic subunit of the molybdopterin synthase complex, a complex that catalyzes the conversion of precursor Z into molybdopterin. Acts by mediating the incorporation of 2 sulfur atoms from thiocarboxylated MOCS2A into precursor Z to generate a dithiolene group. This Arabidopsis thaliana (Mouse-ear cress) protein is Molybdopterin synthase catalytic subunit.